The sequence spans 557 residues: uncharacterized protein (557 aa).

The region spanning 7-206 is the DhaL domain; it reads SSFIDMLRLG…FACFLEGMLS (200 aa).

This is an uncharacterized protein from Mycoplasma genitalium (strain ATCC 33530 / DSM 19775 / NCTC 10195 / G37) (Mycoplasmoides genitalium).